The following is a 49-amino-acid chain: Large ribosomal subunit protein bL33 (49 aa).

Belongs to the bacterial ribosomal protein bL33 family.

In Carboxydothermus hydrogenoformans (strain ATCC BAA-161 / DSM 6008 / Z-2901), this protein is Large ribosomal subunit protein bL33.